The chain runs to 226 residues: ATP-dependent dethiobiotin synthetase BioD (226 aa).

Thr19 is a Mg(2+) binding site. Lys40 is an active-site residue. 2 residues coordinate Mg(2+): Asp53 and Glu114. ATP is bound by residues Asp53, 114 to 117, and 174 to 175; these read EGAG and NR.

The protein belongs to the dethiobiotin synthetase family. As to quaternary structure, homodimer. Mg(2+) is required as a cofactor.

It is found in the cytoplasm. The enzyme catalyses (7R,8S)-7,8-diammoniononanoate + CO2 + ATP = (4R,5S)-dethiobiotin + ADP + phosphate + 3 H(+). It participates in cofactor biosynthesis; biotin biosynthesis; biotin from 7,8-diaminononanoate: step 1/2. Its function is as follows. Catalyzes a mechanistically unusual reaction, the ATP-dependent insertion of CO2 between the N7 and N8 nitrogen atoms of 7,8-diaminopelargonic acid (DAPA, also called 7,8-diammoniononanoate) to form a ureido ring. This chain is ATP-dependent dethiobiotin synthetase BioD, found in Nitrosospira multiformis (strain ATCC 25196 / NCIMB 11849 / C 71).